The chain runs to 486 residues: Ribosomal RNA small subunit methyltransferase F (486 aa).

Residues Ala-124–Lys-130, Glu-148, Asp-175, and Asp-193 contribute to the S-adenosyl-L-methionine site. The active-site Nucleophile is the Cys-246.

It belongs to the class I-like SAM-binding methyltransferase superfamily. RsmB/NOP family.

The protein localises to the cytoplasm. The enzyme catalyses cytidine(1407) in 16S rRNA + S-adenosyl-L-methionine = 5-methylcytidine(1407) in 16S rRNA + S-adenosyl-L-homocysteine + H(+). Specifically methylates the cytosine at position 1407 (m5C1407) of 16S rRNA. The sequence is that of Ribosomal RNA small subunit methyltransferase F from Shewanella baltica (strain OS223).